The primary structure comprises 517 residues: Crotonobetaine/carnitine--CoA ligase (517 aa).

It belongs to the ATP-dependent AMP-binding enzyme family.

The enzyme catalyses 4-(trimethylamino)butanoate + ATP + CoA = 4-(trimethylamino)butanoyl-CoA + AMP + diphosphate. It catalyses the reaction crotonobetaine + ATP + CoA = crotonobetainyl-CoA + AMP + diphosphate. It carries out the reaction (R)-carnitine + ATP + CoA = (R)-carnitinyl-CoA + AMP + diphosphate. It participates in amine and polyamine metabolism; carnitine metabolism. Functionally, catalyzes the transfer of CoA to carnitine, generating the initial carnitinyl-CoA needed for the CaiB reaction cycle. Also has activity toward crotonobetaine and gamma-butyrobetaine. The sequence is that of Crotonobetaine/carnitine--CoA ligase from Escherichia coli O7:K1 (strain IAI39 / ExPEC).